Here is a 61-residue protein sequence, read N- to C-terminus: Ferredoxin (61 aa).

Positions 2–28 (LYITEECTYCGACEPECPTNAISAGSE) constitute a 4Fe-4S ferredoxin-type domain. Residues C8, C11, C14, C18, C37, C40, C49, and C53 each coordinate [4Fe-4S] cluster.

[4Fe-4S] cluster is required as a cofactor.

Ferredoxins are iron-sulfur proteins that transfer electrons in a wide variety of metabolic reactions. This Chlorobaculum thiosulfatiphilum (Chlorobium limicola f.sp. thiosulfatophilum) protein is Ferredoxin.